Here is a 341-residue protein sequence, read N- to C-terminus: Cyclin-Y (341 aa).

Gly2 is lipidated: N-myristoyl glycine. Phosphoserine is present on residues Ser21 and Ser25. Position 30 is a phosphothreonine (Thr30). Ser33 is modified (phosphoserine). The residue at position 37 (Thr37) is a Phosphothreonine. Thr67 bears the Phosphothreonine; by CDK14 mark. Residues Ser71 and Ser73 each carry the phosphoserine; by CDK14 modification. Thr75 carries the post-translational modification Phosphothreonine. Phosphoserine; by CDK14 is present on Ser83. Residues Ser99, Ser100, and Ser102 each carry the phosphoserine modification. The Cyclin N-terminal domain maps to 143–265; it reads DIFDENLHPL…FLELLQFNIN (123 aa). At Ser280 the chain carries Phosphoserine. Phosphoserine; by CDK14 occurs at positions 288 and 295. 2 positions are modified to phosphoserine: Ser324 and Ser326. Thr331 carries the post-translational modification Phosphothreonine.

It belongs to the cyclin family. Cyclin Y subfamily. In terms of assembly, found in a complex with CAPRIN2, LRP6 and CDK14 during G2/M stage; CAPRIN2 functions as a scaffold for the complex by binding to CCNY via its N terminus and to CDK14 via its C terminus. Interacts with CDK14. Interacts with CDK16. Interacts with LRP6. Post-translationally, ubiquitinated; leading to its degradation. Heavily phosphorylated. Phosphorylation at Ser-71 and Ser-73 by CDK14 is enhanced during the G2 and M cell cycle phases, and creates a phosphodegron triggering SCF-dependent ubiquitination. Widely expressed.

It is found in the cell membrane. Its subcellular location is the nucleus. Positive regulatory subunit of the cyclin-dependent kinases CDK14/PFTK1 and CDK16. Acts as a cell-cycle regulator of Wnt signaling pathway during G2/M phase by recruiting CDK14/PFTK1 to the plasma membrane and promoting phosphorylation of LRP6, leading to the activation of the Wnt signaling pathway. Recruits CDK16 to the plasma membrane. Isoform 3 might play a role in the activation of MYC-mediated transcription. The protein is Cyclin-Y (CCNY) of Homo sapiens (Human).